The following is a 660-amino-acid chain: MEAAAAAAAAAAAAAAAGGGCGSGPPPLLLSEGEQQCYSELFARCAGAAGGGPGSGPPEAARVAPGTATAAAGPVADLFRASQLPAETLHQITELCGAKRVGYFGPTQFYIALKLIAAAQSGLPVRIESIKCELPLPRFMMSKNDGEIRFGNPAELHGTKVQIPYLTTEKNSFKRMDDEDKQQETQSPTMSPLASPPSSPPHYQRVPLSHGYSKLRSSAEQMHPAPYEARQPLVQPEGSSSGGPGTKPLRHQASLIRSFSVERELQDNSSYPDEPWRITEEQREYYVNQFRSLQPDPSSFISGSVAKNFFTKSKLSIPELSYIWELSDADCDGALTLPEFCAAFHLIVARKNGYPLPEGLPPTLQPEYLQAAFPKPKWDCQLFDSYSESLPANQQPRDLNRMEKTSVKDMADLPVPNQDVTSDDKQALKSTINEALPKDVSEDPATPKDSNSLKARPRSRSYSSTSIEEAMKRGEDPPTPPPRPQKTHSRASSLDLNKVFQPSVPATKSGLLPPPPALPPRPCPSQSEQVSEAELLPQLSRAPSQAAESSPAKKDVLYSQPPSKPIRRKFRPENQATENQEPSTAASGPASAATMKPHPTVQKQSSKQKKAIQTAIRKNKEANAVLARLNSELQQQLKEVHQERIALENQLEQLRPVTVL.

The 114-residue stretch at 34–147 (EQQCYSELFA…RFMMSKNDGE (114 aa)) folds into the EH 1 domain. Positions 169–208 (EKNSFKRMDDEDKQQETQSPTMSPLASPPSSPPHYQRVPL) are disordered. S254 is modified (phosphoserine). The region spanning 282 to 373 (QREYYVNQFR…LQPEYLQAAF (92 aa)) is the EH 2 domain. Residues 315-350 (LSIPELSYIWELSDADCDGALTLPEFCAAFHLIVAR) form the EF-hand domain. Residues D328, D330, D332, and E339 each coordinate Ca(2+). Residues 433–616 (NEALPKDVSE…KQKKAIQTAI (184 aa)) form a disordered region. The residue at position 479 (T479) is a Phosphothreonine. The residue at position 493 (S493) is a Phosphoserine. Residues 512-523 (LPPPPALPPRPC) show a composition bias toward pro residues. Positions 514–660 (PPPALPPRPC…LEQLRPVTVL (147 aa)) are interaction with RALBP1. The interval 561–660 (PPSKPIRRKF…LEQLRPVTVL (100 aa)) is interaction with ASAP1. The segment covering 582–594 (PSTAASGPASAAT) has biased composition (low complexity). Positions 601-657 (VQKQSSKQKKAIQTAIRKNKEANAVLARLNSELQQQLKEVHQERIALENQLEQLRPV) form a coiled coil.

In terms of assembly, interacts with EPN1; the interaction is direct. Interacts with EPS15; the interaction is direct. Interacts with EPS15L1. Interacts with RALBP1; can form a ternary complex with activated Ral (RALA or RALB). Interacts with ASAP1; the interaction is direct and this complex can bind paxillin. Also forms a ternary complex with RALBP1 and ASAP1. Interacts with GRB2. In terms of processing, tyrosine-phosphorylated upon stimulation of cells with EGF. Phosphorylation on Tyr-residues induces its association with the EGF receptor probably indirectly through an adapter like GRB2. In terms of tissue distribution, expressed at high levels in the cerebrum, cerebellum, lung, kidney, and testis. Weakly expressed in the kidney. Isoform 2 is down-regulated during progression of prostate cancer.

The protein localises to the cytoplasm. Its function is as follows. Involved in ligand-dependent receptor mediated endocytosis of the EGF and insulin receptors as part of the Ral signaling pathway. By controlling growth factor receptors endocytosis may regulate cell survival. Through ASAP1 may regulate cell adhesion and migration. The polypeptide is RalBP1-associated Eps domain-containing protein 2 (REPS2) (Homo sapiens (Human)).